The following is a 953-amino-acid chain: Communesin biosynthesis cluster-specific transcription factor cnsN (953 aa).

Positions 371–418 are disordered; that stretch reads ELESTSPRTSHSSLSQDDTASLHSRSSLSSSPGRFPPSQKLVATSDSP. Residues 374–408 show a composition bias toward low complexity; sequence STSPRTSHSSLSQDDTASLHSRSSLSSSPGRFPPS.

Its subcellular location is the nucleus. Functionally, transcriptional regulator; part of the gene cluster that mediates the biosynthesis of communesins, a prominent class of indole alkaloids with great potential as pharmaceuticals. In Penicillium expansum (Blue mold rot fungus), this protein is Communesin biosynthesis cluster-specific transcription factor cnsN.